A 96-amino-acid chain; its full sequence is Nucleoid-associated protein CF0672 (96 aa).

Belongs to the YbaB/EbfC family. As to quaternary structure, homodimer.

It localises to the cytoplasm. The protein localises to the nucleoid. In terms of biological role, binds to DNA and alters its conformation. May be involved in regulation of gene expression, nucleoid organization and DNA protection. The sequence is that of Nucleoid-associated protein CF0672 from Chlamydia felis (strain Fe/C-56) (Chlamydophila felis).